A 111-amino-acid chain; its full sequence is MSEQAVENTVLDRFECRSCGYVYEPEKGDSKHDIAPETPFAELPINWRCPVCTAKKAAFSNIGPAGTASGFRENLGYGLGVNKLTPAQKNILIFGALALGFLFFISLYGLQ.

A Rubredoxin-like domain is found at L11–I62. Fe cation is bound by residues C16, C19, C49, and C52.

This sequence belongs to the rubredoxin family. Requires Fe(3+) as cofactor.

Rubredoxin is a small nonheme, iron protein lacking acid-labile sulfide. Its single Fe, chelated to 4 Cys, functions as an electron acceptor and may also stabilize the conformation of the molecule. Could be involved in hydrogenase-linked redox processes. In Trichormus variabilis (strain ATCC 29413 / PCC 7937) (Anabaena variabilis), this protein is Rubredoxin (rub).